The following is a 551-amino-acid chain: RCC1 and BTB domain-containing protein 2 (551 aa).

6 RCC1 repeats span residues N64–T115, D117–S169, G171–D222, T223–D274, G276–T326, and G328–E382. The region spanning A394–P457 is the BTB domain.

Expressed in testis and heart (at protein level).

Its subcellular location is the cytoplasmic vesicle. It localises to the secretory vesicle. The protein resides in the acrosome. The polypeptide is RCC1 and BTB domain-containing protein 2 (Rcbtb2) (Mus musculus (Mouse)).